The chain runs to 172 residues: Probable calcium-binding protein CML28 (172 aa).

EF-hand domains are found at residues 1–36 (MDST…FGIF), 37–72 (IPDD…ILGD), 95–130 (DEDE…LGLK), and 133–168 (RTAD…GGFA). Residues aspartate 14, asparagine 16, aspartate 18, arginine 20, glutamate 25, aspartate 50, asparagine 52, aspartate 54, cysteine 56, glutamate 61, aspartate 108, asparagine 110, aspartate 112, glutamate 119, aspartate 146, aspartate 148, aspartate 150, arginine 152, and glutamate 157 each contribute to the Ca(2+) site.

Its function is as follows. Potential calcium sensor. The protein is Probable calcium-binding protein CML28 (CML28) of Oryza sativa subsp. japonica (Rice).